A 76-amino-acid polypeptide reads, in one-letter code: KANTR integral membrane protein (76 aa).

A signal peptide spans 1–25; that stretch reads MSPFSLLILVICAFSLFFLINLTRG. At 26–34 the chain is on the extracellular side; sequence LSILLVFSK. Residues 35 to 55 form a helical membrane-spanning segment; that stretch reads NQLLALLLLSIVSLFSISLIS. Over 56–76 the chain is Cytoplasmic; sequence ALIFFDLLPSTFFGFILLFFF.

It is found in the membrane. This is KANTR integral membrane protein from Homo sapiens (Human).